Consider the following 219-residue polypeptide: Lipid A acyltransferase PagP (219 aa).

An N-terminal signal peptide occupies residues 1 to 28 (MRLILISHSRLFALSALFLIPTFDSLSA). The tract at residues 39-63 (IDRTTQSDSTTQRDSKTRRDPAPSF) is disordered. The segment covering 49-59 (TQRDSKTRRDP) has biased composition (basic and acidic residues). Residues histidine 91, aspartate 134, and serine 135 contribute to the active site.

The protein belongs to the lipid A palmitoyltransferase family. As to quaternary structure, homodimer.

It is found in the cell outer membrane. The enzyme catalyses a lipid A + a 1,2-diacyl-sn-glycero-3-phosphocholine = a hepta-acyl lipid A + a 2-acyl-sn-glycero-3-phosphocholine. The catalysed reaction is a lipid IVA + a 1,2-diacyl-sn-glycero-3-phosphocholine = a lipid IVB + a 2-acyl-sn-glycero-3-phosphocholine. It catalyses the reaction a lipid IIA + a 1,2-diacyl-sn-glycero-3-phosphocholine = a lipid IIB + a 2-acyl-sn-glycero-3-phosphocholine. Transfers a fatty acid residue from the sn-1 position of a phospholipid to the N-linked hydroxyfatty acid chain on the proximal unit of lipid A or its precursors. This is Lipid A acyltransferase PagP from Dickeya zeae (strain Ech586) (Dickeya dadantii (strain Ech586)).